The primary structure comprises 548 residues: Lipase 2 (548 aa).

Positions 1–14 are cleaved as a signal peptide; sequence MKLCLLALGAAVAA. A disulfide bridge links Cys-74 with Cys-111. Ser-223 functions as the Acyl-ester intermediate in the catalytic mechanism. Residues Cys-282 and Cys-291 are joined by a disulfide bond. Glu-355 functions as the Charge relay system in the catalytic mechanism. N-linked (GlcNAc...) asparagine glycosylation occurs at Asn-365. His-463 (charge relay system) is an active-site residue.

It belongs to the type-B carboxylesterase/lipase family.

It carries out the reaction a triacylglycerol + H2O = a diacylglycerol + a fatty acid + H(+). In Diutina rugosa (Yeast), this protein is Lipase 2 (LIP2).